Consider the following 525-residue polypeptide: NGFI-A-binding protein 2 (525 aa).

The disordered stretch occupies residues 1–31; that stretch reads MHRAPSPTAEQPPGRGDNTRRTPQPRFKASA. Ser-6 bears the Phosphoserine mark. Positions 35–113 are NCD1; that stretch reads ALPRTLGELQ…REWATNPGLF (79 aa). Positions 135–238 are disordered; that stretch reads GTRKGSMSNG…GAGGGPDRLE (104 aa). Residues Ser-157, Ser-159, Ser-162, and Ser-171 each carry the phosphoserine modification. The segment covering 212–234 has biased composition (gly residues); the sequence is AGGGVSEGPGVGGVAAGGAGGGP. Residues 267–356 are NCD2; sequence LLKLNKKLAR…SRQVARESTY (90 aa). Positions 353 to 384 are necessary for nuclear localization; it reads ESTYLSSLKGSRLHSEELGGPPLKKLKQEVGE. Lys-379 participates in a covalent cross-link: Glycyl lysine isopeptide (Lys-Gly) (interchain with G-Cter in SUMO1). Positions 381–416 are disordered; it reads EVGEQSHNEIQQPPPGPESYAPPYRPSLEEDSASLS. Ser-479 bears the Phosphoserine mark. The tract at residues 501–525 is disordered; sequence APGPHPALVEGRRSSVKVEAEASRQ. Basic and acidic residues predominate over residues 510–525; the sequence is EGRRSSVKVEAEASRQ. Lys-517 is covalently cross-linked (Glycyl lysine isopeptide (Lys-Gly) (interchain with G-Cter in SUMO1); alternate). Lys-517 is covalently cross-linked (Glycyl lysine isopeptide (Lys-Gly) (interchain with G-Cter in SUMO2); alternate).

It belongs to the NAB family. In terms of assembly, homomultimers may associate with EGR1 bound to DNA. In terms of processing, sumoylation by EGR2 represses EGR2 transcriptional activity in hindbrain. Highly expressed in brain and thymus, and at lower levels in spleen, kidney, heart and testis. Isoform 1 is predominantly expressed in testis, whereas isoform 3 is more abundant in thymus.

It localises to the nucleus. Functionally, acts as a transcriptional repressor for zinc finger transcription factors EGR1 and EGR2. Isoform 2 lacks repression ability. The protein is NGFI-A-binding protein 2 (Nab2) of Mus musculus (Mouse).